We begin with the raw amino-acid sequence, 141 residues long: Nucleoside diphosphate kinase (141 aa).

Residues Lys-11, Phe-59, Arg-87, Thr-93, Arg-104, and Asn-114 each contribute to the ATP site. His-117 acts as the Pros-phosphohistidine intermediate in catalysis.

The protein belongs to the NDK family. Homotetramer. It depends on Mg(2+) as a cofactor.

The protein localises to the cytoplasm. The enzyme catalyses a 2'-deoxyribonucleoside 5'-diphosphate + ATP = a 2'-deoxyribonucleoside 5'-triphosphate + ADP. The catalysed reaction is a ribonucleoside 5'-diphosphate + ATP = a ribonucleoside 5'-triphosphate + ADP. In terms of biological role, major role in the synthesis of nucleoside triphosphates other than ATP. The ATP gamma phosphate is transferred to the NDP beta phosphate via a ping-pong mechanism, using a phosphorylated active-site intermediate. The sequence is that of Nucleoside diphosphate kinase from Cupriavidus metallidurans (strain ATCC 43123 / DSM 2839 / NBRC 102507 / CH34) (Ralstonia metallidurans).